Consider the following 347-residue polypeptide: NADH-ubiquinone oxidoreductase chain 2 (347 aa).

The next 10 membrane-spanning stretches (helical) occupy residues 3–23 (PPILIIIMATIMTGTMIVMLS), 25–45 (HWLLIWIGFEMNMLAIIPILM), 66–86 (ASMLLMMGVTINLLYSGQWVI), 93–115 (IASIMMTTALTMKLGLSPFHFWV), 149–169 (INTNLLMLMALTSVLVGGWGG), 178–198 (IMAYSSIAHMGWMAAIITYNP), 201–221 (MILNLTLYILMTLSTFMLFML), 237–257 (FPLITSMILILMLSLGGLPPL), 274–294 (NMIIIPTLMAITALLNLYFYL), and 325–345 (LLPPLIITSTMLLPLTPMLSV).

The protein belongs to the complex I subunit 2 family. As to quaternary structure, core subunit of respiratory chain NADH dehydrogenase (Complex I) which is composed of 45 different subunits. Interacts with TMEM242.

The protein localises to the mitochondrion inner membrane. The catalysed reaction is a ubiquinone + NADH + 5 H(+)(in) = a ubiquinol + NAD(+) + 4 H(+)(out). Core subunit of the mitochondrial membrane respiratory chain NADH dehydrogenase (Complex I) which catalyzes electron transfer from NADH through the respiratory chain, using ubiquinone as an electron acceptor. Essential for the catalytic activity and assembly of complex I. This Canis lupus (Gray wolf) protein is NADH-ubiquinone oxidoreductase chain 2.